The sequence spans 284 residues: 4-hydroxybenzoate octaprenyltransferase (284 aa).

Transmembrane regions (helical) follow at residues 19-39 (IPILLILWPTLTALVLASHGL), 42-62 (ISYLVIFTIGVVVMRTVGCII), 85-105 (GQLSIKNAIWLCISLTLVAFI), 107-127 (VLFLNLYTILLSFVALFLAIL), 134-154 (FFAIPQLILGLAFNFGIFMAF), 165-185 (AWIFYIATICWTIAYDTIYAL), 211-231 (ILLFNFLSLLLLIILGIYCDF), 233-253 (SFFYLGVVICSLFFVRNYFLY), and 261-281 (CINAFSANHWIGLIIFIIAVI).

The protein belongs to the UbiA prenyltransferase family. The cofactor is Mg(2+).

It is found in the cell inner membrane. It carries out the reaction all-trans-octaprenyl diphosphate + 4-hydroxybenzoate = 4-hydroxy-3-(all-trans-octaprenyl)benzoate + diphosphate. The protein operates within cofactor biosynthesis; ubiquinone biosynthesis. Functionally, catalyzes the prenylation of para-hydroxybenzoate (PHB) with an all-trans polyprenyl group. Mediates the second step in the final reaction sequence of ubiquinone-8 (UQ-8) biosynthesis, which is the condensation of the polyisoprenoid side chain with PHB, generating the first membrane-bound Q intermediate 3-octaprenyl-4-hydroxybenzoate. The protein is 4-hydroxybenzoate octaprenyltransferase of Francisella tularensis subsp. holarctica (strain LVS).